The primary structure comprises 249 residues: ATP synthase subunit a (249 aa).

6 helical membrane passes run 26 to 46 (FTNVSAFMVATVVLASGFLYL), 84 to 104 (FFPFVFSLFMFVLVANFIGLF), 114 to 134 (IIVTFALSLLVIGTVIFYGFF), 143 to 163 (LFVPSGVPGIIVPLVVLIEII), 185 to 205 (ITLKVFAGFVVSLSSLGALGI), and 208 to 228 (AVLPLLMTVAITALEFLVAFL).

It belongs to the ATPase A chain family. As to quaternary structure, F-type ATPases have 2 components, CF(1) - the catalytic core - and CF(0) - the membrane proton channel. CF(1) has five subunits: alpha(3), beta(3), gamma(1), delta(1), epsilon(1). CF(0) has three main subunits: a(1), b(2) and c(9-12). The alpha and beta chains form an alternating ring which encloses part of the gamma chain. CF(1) is attached to CF(0) by a central stalk formed by the gamma and epsilon chains, while a peripheral stalk is formed by the delta and b chains.

The protein resides in the cell inner membrane. Key component of the proton channel; it plays a direct role in the translocation of protons across the membrane. The chain is ATP synthase subunit a from Brucella canis (strain ATCC 23365 / NCTC 10854 / RM-666).